An 89-amino-acid chain; its full sequence is Small ribosomal subunit protein uS15 (89 aa).

The protein belongs to the universal ribosomal protein uS15 family. In terms of assembly, part of the 30S ribosomal subunit. Forms a bridge to the 50S subunit in the 70S ribosome, contacting the 23S rRNA.

Its function is as follows. One of the primary rRNA binding proteins, it binds directly to 16S rRNA where it helps nucleate assembly of the platform of the 30S subunit by binding and bridging several RNA helices of the 16S rRNA. In terms of biological role, forms an intersubunit bridge (bridge B4) with the 23S rRNA of the 50S subunit in the ribosome. The chain is Small ribosomal subunit protein uS15 from Mycobacterium sp. (strain JLS).